Consider the following 248-residue polypeptide: Type II secretion system protein N (248 aa).

Residues 1-6 lie on the Cytoplasmic side of the membrane; it reads MKLKSG. Residues 7 to 27 form a helical; Signal-anchor for type II membrane protein membrane-spanning segment; the sequence is IVTGVALVLAYGLFLASYAPA. Over 28 to 248 the chain is Periplasmic; it reads RLLTAVPLPA…RTLNFQGRLL (221 aa).

The protein belongs to the GSP N family.

The protein localises to the cell inner membrane. In terms of biological role, involved in a type II secretion system (T2SS, formerly general secretion pathway, GSP) for the export of proteins. Required for the translocation of the multiple pectic enzymes. This Pectobacterium carotovorum subsp. carotovorum (Erwinia carotovora subsp. carotovora) protein is Type II secretion system protein N (outN).